The chain runs to 220 residues: Large ribosomal subunit protein uL3 (220 aa).

The tract at residues 145–169 (GPASHGSKFHRRPGSSGNRTWPGRV) is disordered.

The protein belongs to the universal ribosomal protein uL3 family. In terms of assembly, part of the 50S ribosomal subunit. Forms a cluster with proteins L14 and L19.

Its function is as follows. One of the primary rRNA binding proteins, it binds directly near the 3'-end of the 23S rRNA, where it nucleates assembly of the 50S subunit. This Bdellovibrio bacteriovorus (strain ATCC 15356 / DSM 50701 / NCIMB 9529 / HD100) protein is Large ribosomal subunit protein uL3.